The following is a 1215-amino-acid chain: Zinc finger E-box-binding homeobox 2 (1215 aa).

The disordered stretch occupies residues 1-111 (MKQPIMADGP…ILQASVAGPE (111 aa)). Over residues 12 to 24 (CKRRKQANPRRKN) the composition is skewed to basic residues. A compositionally biased stretch (polar residues) spans 57–74 (DQDTSPASMPNHESSPHM). Over residues 89-98 (RESVVEHSWH) the composition is skewed to basic and acidic residues. Ser142 carries the post-translational modification Phosphoserine. C2H2-type zinc fingers lie at residues 211–234 (LTCPYCDRGYKRLTSLKEHIKYRH), 241–263 (FSCPLCSYTFAYRTQLERHMVTH), and 282–304 (FKCTECGKAFKYKHHLKEHLRIH). A C2H2-type 4; atypical zinc finger spans residues 310 to 334 (YECPNCKKRFSHSGSYSSHISSKKC). Ser356, Ser360, and Ser364 each carry phosphoserine. Lys377 bears the N6-acetyllysine mark. A Glycyl lysine isopeptide (Lys-Gly) (interchain with G-Cter in SUMO); alternate cross-link involves residue Lys391. Lys391 participates in a covalent cross-link: Glycyl lysine isopeptide (Lys-Gly) (interchain with G-Cter in SUMO2); alternate. The interval 437 to 487 (QHLGVGMEAPLLGFPTMNSNLSEVQKVLQIVDNTVSRQKMDCKTEDISKLK) is SMAD-MH2 binding domain. Residues Lys479 and Lys555 each participate in a glycyl lysine isopeptide (Lys-Gly) (interchain with G-Cter in SUMO2) cross-link. The C2H2-type 5; degenerate zinc-finger motif lies at 581 to 605 (FSCQFCKESFPGPIPLHQHERYLCK). Residues Lys611 and Lys632 each participate in a glycyl lysine isopeptide (Lys-Gly) (interchain with G-Cter in SUMO2) cross-link. The segment at residues 644–703 (GLTSPINPYKDHMSVLKAYYAMNMEPNSDELLKISIAVGLPQEFVKEWFEQRKVYQYSNS) is a DNA-binding region (homeobox; atypical). Ser647 is subject to Phosphoserine. Disordered regions lie at residues 702–740 (NSRSPSLERTSKPLAPNSNPTTKDSLLPRSPVKPMDSIT) and 772–811 (VDKLDHSRSNTPSPLNLSSTSSKNSHSSSYTPNSFSSEEL). Lys713 is covalently cross-linked (Glycyl lysine isopeptide (Lys-Gly) (interchain with G-Cter in SUMO2)). Phosphoserine is present on residues Ser731 and Ser780. Residues 780 to 808 (SNTPSPLNLSSTSSKNSHSSSYTPNSFSS) show a composition bias toward low complexity. Thr782 carries the post-translational modification Phosphothreonine. The residue at position 784 (Ser784) is a Phosphoserine. Lys866 is covalently cross-linked (Glycyl lysine isopeptide (Lys-Gly) (interchain with G-Cter in SUMO); alternate). Lys866 participates in a covalent cross-link: Glycyl lysine isopeptide (Lys-Gly) (interchain with G-Cter in SUMO2); alternate. 2 consecutive C2H2-type zinc fingers follow at residues 999–1021 (YACDLCDKTFQKSSSLLRHKYEH) and 1027–1049 (HQCQICKKAFKHKHHLIEHSRLH). The C2H2-type 8; atypical zinc finger occupies 1055–1076 (YQCDKCGKRFSHSGSYSQHMNH). The disordered stretch occupies residues 1117–1215 (TPQGYSDSEE…EEDNMEDGME (99 aa)). 2 positions are modified to phosphoserine: Ser1122 and Ser1124. Residues 1127–1149 (RESMPRDGESEKEHEKEGEEGYG) are compositionally biased toward basic and acidic residues. The segment covering 1157–1167 (DEEEEEEEEES) has biased composition (acidic residues). Composition is skewed to basic and acidic residues over residues 1168-1179 (ENKSMDTDPETI) and 1186-1205 (GDHSMDDSSEDGKMETKSDH). Ser1203 is subject to Phosphoserine. Residues 1206 to 1215 (EEDNMEDGME) show a composition bias toward acidic residues.

It belongs to the delta-EF1/ZFH-1 C2H2-type zinc-finger family. In terms of assembly, interacts with CBX4 and CTBP1. Binds activated SMAD1, activated SMAD2 and activated SMAD3; binding with SMAD4 is not detected. In terms of processing, sumoylation on Lys-391 and Lys-866 is promoted by the E3 SUMO-protein ligase CBX4, and impairs interaction with CTBP1 and transcription repression activity.

The protein resides in the nucleus. Its subcellular location is the chromosome. Its function is as follows. Transcriptional inhibitor that binds to DNA sequence 5'-CACCT-3' in different promoters. Represses transcription of E-cadherin. Represses expression of MEOX2. The polypeptide is Zinc finger E-box-binding homeobox 2 (Zeb2) (Mus musculus (Mouse)).